A 395-amino-acid chain; its full sequence is Succinyl-diaminopimelate desuccinylase (395 aa).

Position 74 (His-74) interacts with Zn(2+). Residue Asp-76 is part of the active site. A Zn(2+)-binding site is contributed by Asp-107. Residue Glu-141 is the Proton acceptor of the active site. Residues Glu-142, Glu-170, and His-368 each coordinate Zn(2+).

Belongs to the peptidase M20A family. DapE subfamily. In terms of assembly, homodimer. The cofactor is Zn(2+). Co(2+) serves as cofactor.

It carries out the reaction N-succinyl-(2S,6S)-2,6-diaminopimelate + H2O = (2S,6S)-2,6-diaminopimelate + succinate. Its pathway is amino-acid biosynthesis; L-lysine biosynthesis via DAP pathway; LL-2,6-diaminopimelate from (S)-tetrahydrodipicolinate (succinylase route): step 3/3. Catalyzes the hydrolysis of N-succinyl-L,L-diaminopimelic acid (SDAP), forming succinate and LL-2,6-diaminopimelate (DAP), an intermediate involved in the bacterial biosynthesis of lysine and meso-diaminopimelic acid, an essential component of bacterial cell walls. The protein is Succinyl-diaminopimelate desuccinylase of Chelativorans sp. (strain BNC1).